The sequence spans 586 residues: Ezrin (586 aa).

In terms of domain architecture, FERM spans 2–296; sequence PKPINVRVTT…NHELYMRRRK (295 aa). Lysine 60 is modified (N6-acetyllysine). The short motif at 115–120 is the [IL]-x-C-x-x-[DE] motif element; sequence IYCPPE. Phosphotyrosine; by PDGFR is present on tyrosine 146. Residues 244–586 form an interaction with SCYL3 region; it reads EIRNISFNDK…KQRIDEFEAL (343 aa). A coiled-coil region spans residues 302 to 462; the sequence is VQQMKAQARE…QDDLVKTKEE (161 aa). Positions 306–341 are disordered; it reads KAQAREEKHQKQLERQQLETEKKRRETVEREKEQMM. Residues 308–341 show a composition bias toward basic and acidic residues; that stretch reads QAREEKHQKQLERQQLETEKKRRETVEREKEQMM. Tyrosine 354 carries the phosphotyrosine; by PDGFR modification. Serine 366 carries the phosphoserine modification. Tyrosine 478 bears the Phosphotyrosine mark. The segment at 485-564 is disordered; that stretch reads VQESLQDEGA…NENMRQGRDK (80 aa). The segment covering 507 to 528 has biased composition (basic and acidic residues); it reads GIRDDRNEEKRITEAEKNERVQ. Over residues 530-539 the composition is skewed to polar residues; the sequence is QLLTLSSELS. Serine 535 bears the Phosphoserine mark. Positions 540 to 564 are enriched in basic and acidic residues; that stretch reads QARDENKRTHNDIIHNENMRQGRDK. Threonine 567 carries the phosphothreonine; by ROCK2 and PKC/PRKCI modification.

Monomer. Homodimer. Interacts with PALS1 and NHERF2. Found in a complex with EZR, PODXL and NHERF2. Interacts with MCC, PLEKHG6, PODXL, SCYL3/PACE1, NHERF1 and TMEM8B. Interacts (when phosphorylated) with FES/FPS. Interacts with dimeric S100P, the interaction may be activating through unmasking of F-actin binding sites. Identified in complexes that contain VIM, EZR, AHNAK, BFSP1, BFSP2, ANK2, PLEC, PRX and spectrin. Detected in a complex composed of at least EZR, AHNAK, PPL and PRX. Interacts with PDPN (via cytoplasmic domain); activates RHOA and promotes epithelial-mesenchymal transition. Interacts with SPN/CD43 cytoplasmic tail, CD44 and ICAM2. Interacts with SLC9A3; interaction targets SLC9A3 to the apical membrane. Interacts with SLC9A1; regulates interactions of SLC9A1 with cytoskeletal and promotes stress fiber formation. Interacts with CLIC5; may work together in a complex which also includes RDX and MYO6 to stabilize linkages between the plasma membrane and subjacent actin cytoskeleton at the base of stereocilia. Post-translationally, phosphorylated by tyrosine-protein kinases. Phosphorylation by ROCK2 suppresses the head-to-tail association of the N-terminal and C-terminal halves resulting in an opened conformation which is capable of actin and membrane-binding. S-nitrosylation is induced by interferon-gamma and oxidatively-modified low-densitity lipoprotein (LDL(ox)) possibly implicating the iNOS-S100A8/9 transnitrosylase complex. Expressed in cerebral cortex, basal ganglia, hippocampus, hypophysis, and optic nerve. Weakly expressed in brain stem and diencephalon. Stronger expression was detected in gray matter of frontal lobe compared to white matter (at protein level). Component of the microvilli of intestinal epithelial cells. Preferentially expressed in astrocytes of hippocampus, frontal cortex, thalamus, parahippocampal cortex, amygdala, insula, and corpus callosum. Not detected in neurons in most tissues studied.

Its subcellular location is the apical cell membrane. It is found in the cell projection. The protein resides in the microvillus membrane. It localises to the ruffle membrane. The protein localises to the cytoplasm. Its subcellular location is the cell cortex. It is found in the cytoskeleton. The protein resides in the microvillus. A head-to-tail association, of the N-terminal and C-terminal halves results in a closed conformation (inactive form) which is incapable of actin or membrane-binding. Its function is as follows. Probably involved in connections of major cytoskeletal structures to the plasma membrane. In epithelial cells, required for the formation of microvilli and membrane ruffles on the apical pole. Along with PLEKHG6, required for normal macropinocytosis. This is Ezrin (EZR) from Homo sapiens (Human).